The sequence spans 304 residues: Putative dihydroorotate dehydrogenase A (fumarate) (304 aa).

FMN contacts are provided by residues S22 and 46 to 47 (KG). Residues K46 and 70-74 (NSVGL) each bind substrate. FMN is bound by residues N100 and N128. N128 lines the substrate pocket. The active-site Nucleophile is the C131. The FMN site is built by K166 and V192. 193 to 194 (NT) contacts substrate. FMN-binding positions include G218, 244–245 (GG), and 266–267 (GT).

It belongs to the dihydroorotate dehydrogenase family. Type 1 subfamily. Homodimer. FMN is required as a cofactor.

It localises to the cytoplasm. It carries out the reaction (S)-dihydroorotate + fumarate = orotate + succinate. The protein operates within pyrimidine metabolism; UMP biosynthesis via de novo pathway. Catalyzes the conversion of dihydroorotate to orotate with fumarate as the electron acceptor. This is Putative dihydroorotate dehydrogenase A (fumarate) (pyrD) from Solibacter usitatus (strain Ellin6076).